A 118-amino-acid chain; its full sequence is Small ribosomal subunit protein uS13 (118 aa).

Positions 94–118 (GLPVRGQRTKTNARTRKGPRKPIKK) are disordered.

Belongs to the universal ribosomal protein uS13 family. Part of the 30S ribosomal subunit. Forms a loose heterodimer with protein S19. Forms two bridges to the 50S subunit in the 70S ribosome.

Located at the top of the head of the 30S subunit, it contacts several helices of the 16S rRNA. In the 70S ribosome it contacts the 23S rRNA (bridge B1a) and protein L5 of the 50S subunit (bridge B1b), connecting the 2 subunits; these bridges are implicated in subunit movement. Contacts the tRNAs in the A and P-sites. The polypeptide is Small ribosomal subunit protein uS13 (Tolumonas auensis (strain DSM 9187 / NBRC 110442 / TA 4)).